Here is a 198-residue protein sequence, read N- to C-terminus: Protein hunchback (198 aa).

Disordered regions lie at residues 16–111 (SHHH…LPGL) and 152–198 (NDKL…KYMA). A compositionally biased stretch (basic residues) spans 17-31 (HHHHHHHAHHSHHQH). 2 stretches are compositionally biased toward low complexity: residues 35–46 (SNSNSNASSPHQ) and 56–83 (SNTN…QQQQ). Positions 95 to 105 (PSPSNNDQNSP) are enriched in polar residues. Over residues 179 to 198 (EPEKEHDLMSNSSEDMKYMA) the composition is skewed to basic and acidic residues.

Belongs to the hunchback C2H2-type zinc-finger protein family.

It is found in the nucleus. Its function is as follows. Gap class segmentation protein that controls development of head structures. In Drosophila lineosetae (Fruit fly), this protein is Protein hunchback (hb).